Reading from the N-terminus, the 340-residue chain is Uroporphyrinogen decarboxylase (340 aa).

Residues Arg-21 to Arg-25, Phe-40, Asp-71, Tyr-146, Ser-201, and His-316 contribute to the substrate site.

Belongs to the uroporphyrinogen decarboxylase family. As to quaternary structure, homodimer.

It localises to the cytoplasm. It catalyses the reaction uroporphyrinogen III + 4 H(+) = coproporphyrinogen III + 4 CO2. It participates in porphyrin-containing compound metabolism; protoporphyrin-IX biosynthesis; coproporphyrinogen-III from 5-aminolevulinate: step 4/4. Its function is as follows. Catalyzes the decarboxylation of four acetate groups of uroporphyrinogen-III to yield coproporphyrinogen-III. The chain is Uroporphyrinogen decarboxylase from Rickettsia bellii (strain RML369-C).